A 288-amino-acid polypeptide reads, in one-letter code: Intermediate transcription factor 3 small subunit (288 aa).

It belongs to the orthopoxvirus OPG134 family. Heterodimer of a 45 kDa (A23R) and a 32 kDa (A8R) subunit to form the virus intermediate transcription factor (VITF)-3.

Its function is as follows. Acts with RNA polymerase to initiate transcription from intermediate gene promoters. The chain is Intermediate transcription factor 3 small subunit (OPG134) from Vaccinia virus (strain Copenhagen) (VACV).